Here is a 239-residue protein sequence, read N- to C-terminus: NAD(P)H-hydrate epimerase (239 aa).

The 207-residue stretch at 14–220 (AAALDQELMS…EMAEQYNLDI (207 aa)) folds into the YjeF N-terminal domain. Position 64-68 (64-68 (NNGGD)) interacts with (6S)-NADPHX. 2 residues coordinate K(+): Asn65 and Asp126. Residues 130-136 (GFSFSGE) and Asp159 each bind (6S)-NADPHX. Ser162 is a K(+) binding site.

The protein belongs to the NnrE/AIBP family. Requires K(+) as cofactor.

Its subcellular location is the cytoplasm. The protein resides in the mitochondrion. It catalyses the reaction (6R)-NADHX = (6S)-NADHX. The enzyme catalyses (6R)-NADPHX = (6S)-NADPHX. In terms of biological role, catalyzes the epimerization of the S- and R-forms of NAD(P)HX, a damaged form of NAD(P)H that is a result of enzymatic or heat-dependent hydration. This is a prerequisite for the S-specific NAD(P)H-hydrate dehydratase to allow the repair of both epimers of NAD(P)HX. In Phaeosphaeria nodorum (strain SN15 / ATCC MYA-4574 / FGSC 10173) (Glume blotch fungus), this protein is NAD(P)H-hydrate epimerase.